Consider the following 400-residue polypeptide: Subtilisin-like protease 7 (400 aa).

An N-terminal signal peptide occupies residues 1-20 (MGFITKAIPLALAAASVING). The propeptide occupies 21–119 (AEIMETRAGV…IERDARVQIN (99 aa)). One can recognise an Inhibitor I9 domain in the interval 36–118 (KYIVVMNDGM…YIERDARVQI (83 aa)). A glycan (N-linked (GlcNAc...) asparagine) is linked at asparagine 58. In terms of domain architecture, Peptidase S8 spans 129–400 (SWGLARVGSK…SKLINNGSGM (272 aa)). Residues aspartate 161 and histidine 192 each act as charge relay system in the active site. Residues asparagine 222 and asparagine 252 are each glycosylated (N-linked (GlcNAc...) asparagine). The active-site Charge relay system is serine 346. Asparagine 396 carries N-linked (GlcNAc...) asparagine glycosylation.

The protein belongs to the peptidase S8 family.

It localises to the secreted. Functionally, secreted subtilisin-like serine protease with keratinolytic activity that contributes to pathogenicity. In Arthroderma benhamiae (Trichophyton mentagrophytes), this protein is Subtilisin-like protease 7 (SUB7).